Here is a 224-residue protein sequence, read N- to C-terminus: Cytidylate kinase (224 aa).

Gly-11 to Thr-19 contacts ATP.

This sequence belongs to the cytidylate kinase family. Type 1 subfamily.

Its subcellular location is the cytoplasm. The enzyme catalyses CMP + ATP = CDP + ADP. It carries out the reaction dCMP + ATP = dCDP + ADP. The polypeptide is Cytidylate kinase (Geobacillus thermodenitrificans (strain NG80-2)).